A 132-amino-acid chain; its full sequence is Fatty acid-binding protein, brain (132 aa).

Position 2 is an N-acetylvaline (Val-2). 127 to 129 (RHY) serves as a coordination point for a fatty acid.

This sequence belongs to the calycin superfamily. Fatty-acid binding protein (FABP) family. In terms of tissue distribution, expressed in brain and other neural tissues.

Its subcellular location is the cytoplasm. B-FABP could be involved in the transport of a so far unknown hydrophobic ligand with potential morphogenic activity during CNS development. It is required for the establishment of the radial glial fiber system in developing brain, a system that is necessary for the migration of immature neurons to establish cortical layers. The chain is Fatty acid-binding protein, brain (FABP7) from Homo sapiens (Human).